Here is a 290-residue protein sequence, read N- to C-terminus: Ribosomal RNA small subunit methyltransferase A (290 aa).

S-adenosyl-L-methionine-binding residues include asparagine 27, leucine 29, glycine 54, glutamate 75, aspartate 100, and asparagine 125.

The protein belongs to the class I-like SAM-binding methyltransferase superfamily. rRNA adenine N(6)-methyltransferase family. RsmA subfamily.

It is found in the cytoplasm. It catalyses the reaction adenosine(1518)/adenosine(1519) in 16S rRNA + 4 S-adenosyl-L-methionine = N(6)-dimethyladenosine(1518)/N(6)-dimethyladenosine(1519) in 16S rRNA + 4 S-adenosyl-L-homocysteine + 4 H(+). Specifically dimethylates two adjacent adenosines (A1518 and A1519) in the loop of a conserved hairpin near the 3'-end of 16S rRNA in the 30S particle. May play a critical role in biogenesis of 30S subunits. The polypeptide is Ribosomal RNA small subunit methyltransferase A (Streptococcus pyogenes serotype M5 (strain Manfredo)).